The sequence spans 45 residues: ADLIERRQRSEFQFSAVGLGPRTDYEVDILTTFTKLNYEAYTYPR.

It is found in the plastid. It localises to the chloroplast thylakoid. The protein is Unknown protein from spots 23/28/205 of 2D-PAGE of thylakoid of Pisum sativum (Garden pea).